Consider the following 86-residue polypeptide: Small ribosomal subunit protein bS16 (86 aa).

The protein belongs to the bacterial ribosomal protein bS16 family.

The chain is Small ribosomal subunit protein bS16 from Stenotrophomonas maltophilia (strain R551-3).